Reading from the N-terminus, the 737-residue chain is Polyribonucleotide nucleotidyltransferase (737 aa).

The Mg(2+) site is built by Asp489 and Asp495. Residues 556-615 (PKIDTIKIDVDKIKIVIGKGGETIDKIIAETGVKIDIDEEGNVSIYSSDQDAINRAKEII) enclose the KH domain. In terms of domain architecture, S1 motif spans 625–693 (DEVYRAKVVR…EKGRIDASMK (69 aa)). Positions 691–737 (SMKALLPRPPKPEHDEKGEKSERPHRPRHHKDHKPKKEFTETPKDSE) are disordered. The segment covering 700-714 (PKPEHDEKGEKSERP) has biased composition (basic and acidic residues). The segment covering 715-724 (HRPRHHKDHK) has biased composition (basic residues). The span at 725–737 (PKKEFTETPKDSE) shows a compositional bias: basic and acidic residues.

The protein belongs to the polyribonucleotide nucleotidyltransferase family. Mg(2+) serves as cofactor.

The protein localises to the cytoplasm. It carries out the reaction RNA(n+1) + phosphate = RNA(n) + a ribonucleoside 5'-diphosphate. Functionally, involved in mRNA degradation. Catalyzes the phosphorolysis of single-stranded polyribonucleotides processively in the 3'- to 5'-direction. The chain is Polyribonucleotide nucleotidyltransferase from Streptococcus pneumoniae (strain Taiwan19F-14).